The primary structure comprises 876 residues: GRB2-associated and regulator of MAPK protein 1 (876 aa).

Residues 12-320 (KDVKWSSVAV…HLVKGESWPE (309 aa)) form a CABIT region. Phosphotyrosine occurs at positions 105 and 453. Residues 496–572 (IPGTLGAAVK…SPSPTLSYYS (77 aa)) are disordered. The interval 498–550 (GTLGAAVKSSDTALPPPPVPPKSEAVREECRLLNAPPVPPRSAKPLSTSPSIP) is necessary for interaction with GRB2. The span at 558-572 (RQQTRSPSPTLSYYS) shows a compositional bias: polar residues. Phosphoserine is present on residues Ser-610 and Ser-614. 2 disordered regions span residues 626-664 (WPNHYSGASESQTRSDFLLDPSRSYSYPRQKTPGTPKRN) and 738-763 (ASETSPLPLKIDGAEEDPKSGSPDLS). 2 stretches are compositionally biased toward polar residues: residues 631-640 (SGASESQTRS) and 648-658 (RSYSYPRQKTP). Residues 811–876 (LSIEEVSKSL…QFINGWRPKI (66 aa)) enclose the SAM domain.

It belongs to the GAREM family. As to quaternary structure, isoform 1 interacts with EGFR. Isoform 1 interacts (via proline-rich domain and phosphorylated at Tyr-105 and Tyr-453) with GRB2 (via SH3 domains); the interaction occurs upon EGF stimulation. Isoform 1 interacts (phosphorylated at Tyr-453) with PTPN11; the interaction increases MAPK/ERK activity and does not affect the GRB2/SOS complex formation. Isoform 2 does not interact with GRB2. Post-translationally, on EGF stimulation, phosphorylated on Tyr-105 and Tyr-453. In terms of tissue distribution, isoform 1 is ubiquitously expressed.

Acts as an adapter protein that plays a role in intracellular signaling cascades triggered either by the cell surface activated epidermal growth factor receptor and/or cytoplasmic protein tyrosine kinases. Promotes activation of the MAPK/ERK signaling pathway. Plays a role in the regulation of cell proliferation. The protein is GRB2-associated and regulator of MAPK protein 1 (GAREM1) of Homo sapiens (Human).